Consider the following 147-residue polypeptide: D-aminoacyl-tRNA deacylase (147 aa).

Positions 136 to 137 (GP) match the Gly-cisPro motif, important for rejection of L-amino acids motif.

It belongs to the DTD family. Homodimer.

The protein localises to the cytoplasm. It carries out the reaction glycyl-tRNA(Ala) + H2O = tRNA(Ala) + glycine + H(+). It catalyses the reaction a D-aminoacyl-tRNA + H2O = a tRNA + a D-alpha-amino acid + H(+). Its function is as follows. An aminoacyl-tRNA editing enzyme that deacylates mischarged D-aminoacyl-tRNAs. Also deacylates mischarged glycyl-tRNA(Ala), protecting cells against glycine mischarging by AlaRS. Acts via tRNA-based rather than protein-based catalysis; rejects L-amino acids rather than detecting D-amino acids in the active site. By recycling D-aminoacyl-tRNA to D-amino acids and free tRNA molecules, this enzyme counteracts the toxicity associated with the formation of D-aminoacyl-tRNA entities in vivo and helps enforce protein L-homochirality. The sequence is that of D-aminoacyl-tRNA deacylase from Streptococcus pyogenes serotype M1.